We begin with the raw amino-acid sequence, 402 residues long: 1-deoxy-D-xylulose 5-phosphate reductoisomerase (402 aa).

5 residues coordinate NADPH: threonine 13, glycine 14, serine 15, isoleucine 16, and asparagine 126. 1-deoxy-D-xylulose 5-phosphate is bound at residue lysine 127. An NADPH-binding site is contributed by glutamate 128. Mn(2+) is bound at residue aspartate 152. Serine 153, glutamate 154, serine 188, and histidine 211 together coordinate 1-deoxy-D-xylulose 5-phosphate. Glutamate 154 provides a ligand contact to Mn(2+). NADPH is bound at residue glycine 217. The 1-deoxy-D-xylulose 5-phosphate site is built by serine 224, asparagine 229, lysine 230, and glutamate 233. Residue glutamate 233 coordinates Mn(2+).

The protein belongs to the DXR family. The cofactor is Mg(2+). Mn(2+) is required as a cofactor.

It catalyses the reaction 2-C-methyl-D-erythritol 4-phosphate + NADP(+) = 1-deoxy-D-xylulose 5-phosphate + NADPH + H(+). It functions in the pathway isoprenoid biosynthesis; isopentenyl diphosphate biosynthesis via DXP pathway; isopentenyl diphosphate from 1-deoxy-D-xylulose 5-phosphate: step 1/6. Its function is as follows. Catalyzes the NADPH-dependent rearrangement and reduction of 1-deoxy-D-xylulose-5-phosphate (DXP) to 2-C-methyl-D-erythritol 4-phosphate (MEP). The protein is 1-deoxy-D-xylulose 5-phosphate reductoisomerase of Psychrobacter arcticus (strain DSM 17307 / VKM B-2377 / 273-4).